A 100-amino-acid polypeptide reads, in one-letter code: Small ribosomal subunit protein uS14 (100 aa).

It belongs to the universal ribosomal protein uS14 family. As to quaternary structure, part of the 30S ribosomal subunit. Contacts proteins S3 and S10.

In terms of biological role, binds 16S rRNA, required for the assembly of 30S particles and may also be responsible for determining the conformation of the 16S rRNA at the A site. The polypeptide is Small ribosomal subunit protein uS14 (Prochlorococcus marinus (strain NATL1A)).